A 519-amino-acid polypeptide reads, in one-letter code: Pleckstrin homology domain-containing family A member 8 (519 aa).

A PH domain is found at Met1 to Ala93. Thr139 carries the phosphothreonine modification. Ser145 carries the post-translational modification Phosphoserine. Residue Thr153 is modified to Phosphothreonine. A disordered region spans residues Gly275–Glu302. The tract at residues Ile330 to Lys473 is glycolipid transfer protein homology domain.

As to quaternary structure, homodimer. Interacts with ARF1; the interaction together with phosphatidylinositol 4-phosphate binding is required for FAPP2 GlcCer transfer ability.

The protein localises to the golgi apparatus. It is found in the trans-Golgi network membrane. The protein resides in the membrane. In terms of biological role, cargo transport protein that is required for apical transport from the trans-Golgi network (TGN). Transports AQP2 from the trans-Golgi network (TGN) to sites of AQP2 phosphorylation. Mediates the non-vesicular transport of glucosylceramide (GlcCer) from the trans-Golgi network (TGN) to the plasma membrane and plays a pivotal role in the synthesis of complex glycosphingolipids. Binding of both phosphatidylinositol 4-phosphate (PIP) and ARF1 are essential for the GlcCer transfer ability. Also required for primary cilium formation, possibly by being involved in the transport of raft lipids to the apical membrane, and for membrane tubulation. The polypeptide is Pleckstrin homology domain-containing family A member 8 (Plekha8) (Mus musculus (Mouse)).